The chain runs to 697 residues: SPX domain-containing membrane protein OsI_08463 (697 aa).

In terms of domain architecture, SPX spans 2–145; sequence VNFGKRLMAD…GYKFTDYYVS (144 aa). 11 helical membrane passes run 247–267, 278–298, 315–335, 338–356, 375–395, 411–431, 513–533, 544–564, 576–596, 604–624, and 670–690; these read FMSL…TYII, LGAA…AQVF, LVFS…AYDV, LTVL…ARAV, AGFV…AGLL, LPGW…WISF, LLIY…SSVV, TVAM…VIVG, ILVA…RFTS, VSSA…NLSL, and LLNV…VATF.

Belongs to the major facilitator superfamily.

Its subcellular location is the membrane. The protein is SPX domain-containing membrane protein OsI_08463 of Oryza sativa subsp. indica (Rice).